The following is a 62-amino-acid chain: Large ribosomal subunit protein bL28 (62 aa).

The protein belongs to the bacterial ribosomal protein bL28 family.

In Carboxydothermus hydrogenoformans (strain ATCC BAA-161 / DSM 6008 / Z-2901), this protein is Large ribosomal subunit protein bL28.